The following is a 361-amino-acid chain: Flagellar P-ring protein (361 aa).

A signal peptide spans 1–18 (MRKFTILLMLLLASSAQA).

It belongs to the FlgI family. As to quaternary structure, the basal body constitutes a major portion of the flagellar organelle and consists of four rings (L,P,S, and M) mounted on a central rod.

It localises to the periplasm. The protein resides in the bacterial flagellum basal body. Assembles around the rod to form the L-ring and probably protects the motor/basal body from shearing forces during rotation. The sequence is that of Flagellar P-ring protein from Vibrio cholerae serotype O1 (strain ATCC 39541 / Classical Ogawa 395 / O395).